Here is a 711-residue protein sequence, read N- to C-terminus: Polyribonucleotide nucleotidyltransferase (711 aa).

Positions 486 and 492 each coordinate Mg(2+). The KH domain maps to 553-612 (PRIHTIKINPDKIKDVIGKGGSVIRALTEETGTTIEIEDDGTVKIAATDGEKAKHAIRRI). Residues 622-690 (GRVYTGKVTR…RQGRIRLSIK (69 aa)) form the S1 motif domain. The interval 689-711 (IKEATEQSQPAAAPEAPAAEQGE) is disordered. The segment covering 694–711 (EQSQPAAAPEAPAAEQGE) has biased composition (low complexity).

This sequence belongs to the polyribonucleotide nucleotidyltransferase family. Component of the RNA degradosome, which is a multiprotein complex involved in RNA processing and mRNA degradation. The cofactor is Mg(2+).

The protein localises to the cytoplasm. It carries out the reaction RNA(n+1) + phosphate = RNA(n) + a ribonucleoside 5'-diphosphate. Involved in mRNA degradation. Catalyzes the phosphorolysis of single-stranded polyribonucleotides processively in the 3'- to 5'-direction. The chain is Polyribonucleotide nucleotidyltransferase from Escherichia coli (strain ATCC 8739 / DSM 1576 / NBRC 3972 / NCIMB 8545 / WDCM 00012 / Crooks).